A 338-amino-acid polypeptide reads, in one-letter code: RNA 3'-terminal phosphate cyclase (338 aa).

ATP contacts are provided by residues glutamine 103 and 283–287 (YLADQ). Catalysis depends on histidine 308, which acts as the Tele-AMP-histidine intermediate.

Belongs to the RNA 3'-terminal cyclase family. Type 1 subfamily.

It localises to the cytoplasm. It carries out the reaction a 3'-end 3'-phospho-ribonucleotide-RNA + ATP = a 3'-end 2',3'-cyclophospho-ribonucleotide-RNA + AMP + diphosphate. Catalyzes the conversion of 3'-phosphate to a 2',3'-cyclic phosphodiester at the end of RNA. The mechanism of action of the enzyme occurs in 3 steps: (A) adenylation of the enzyme by ATP; (B) transfer of adenylate to an RNA-N3'P to produce RNA-N3'PP5'A; (C) and attack of the adjacent 2'-hydroxyl on the 3'-phosphorus in the diester linkage to produce the cyclic end product. The biological role of this enzyme is unknown but it is likely to function in some aspects of cellular RNA processing. The chain is RNA 3'-terminal phosphate cyclase from Escherichia coli O45:K1 (strain S88 / ExPEC).